We begin with the raw amino-acid sequence, 617 residues long: METKKGSLDWKNLQYDLQPWIKEAIASLGFPTMTPVQAATIPLLSGNKDVVVEAVTGSGKTLAFAIPVLQKVSNRLYDSQEEGEAPEKVKQGHMLAIVLSPTRELASQIQSVFNNVIEYLPEDKIPIKTQLLVGSLSTVRDDLDRFLKDKPHILIATPGRMLDFMSSQYVKMNSVEIAILDEADKLLDFSFEKDVVNILKRLPKQRRTGLFSATISAAGNTIFRAGMNNPVKVAVKSKSTTANSAPSALHISYLMIEPEKKITTLIKLLHDYRYKKCIVYFPTCTSVKHFYSIFQKIVNGNDNTESFKFYSLHGQLATKPRLRTLQSFTDGDVALNKHILMTTDVAARGIDIPDVDLVIQLDPPTDPDVFLHRCGRTGRANKVGRAIVMLNDGSRELDYVDFMEVKGVAMQEMPTPDLNQSDHQQFQDKLRKYMLDDRARHEIAIKSYVGFVRYYTKHMATSIFRYQTLDYLGIAKMYGLLRLPKMPESKYIPNDNMPDDGWLGEPIDMDKYSYADNQQEASRLENLNAEKIKKIADAKRRKELKVKNEAWSSKTETKETKQERREKMKRKREAIEKQIMEESSDDEETKVDWKDIVKSNKKKKANSGSMQGSFDDL.

Residues 10–38 (WKNLQYDLQPWIKEAIASLGFPTMTPVQA) carry the Q motif motif. In terms of domain architecture, Helicase ATP-binding spans 41–233 (IPLLSGNKDV…RAGMNNPVKV (193 aa)). 54 to 61 (AVTGSGKT) lines the ATP pocket. Residues 181-184 (DEAD) carry the DEAD box motif. A Helicase C-terminal domain is found at 261–421 (KITTLIKLLH…EMPTPDLNQS (161 aa)). Residues 515 to 585 (ADNQQEASRL…EKQIMEESSD (71 aa)) adopt a coiled-coil conformation. The segment at 547–617 (KNEAWSSKTE…GSMQGSFDDL (71 aa)) is disordered. The segment covering 555–566 (TETKETKQERRE) has biased composition (basic and acidic residues). Positions 608-617 (GSMQGSFDDL) are enriched in polar residues.

It belongs to the DEAD box helicase family. DDX55/SPB4 subfamily. Component of pre-60S ribosomal complexes.

Its subcellular location is the nucleus. The protein localises to the nucleolus. The catalysed reaction is ATP + H2O = ADP + phosphate + H(+). ATP-binding RNA helicase involved in the biogenesis of 60S ribosomal subunits. Binds 90S pre-ribosomal particles and dissociates from pre-60S ribosomal particles after processing of 27SB pre-rRNA. Required for the normal formation of 18S rRNA through the processing of pre-rRNAs at sites A0, A1 and A2, and the normal formation of 25S and 5.8S rRNAs through the processing of pre-rRNAs at sites C1 and C2. This chain is ATP-dependent rRNA helicase SPB4, found in Scheffersomyces stipitis (strain ATCC 58785 / CBS 6054 / NBRC 10063 / NRRL Y-11545) (Yeast).